The chain runs to 161 residues: Small ribosomal subunit protein bS6 (161 aa).

The tract at residues 107 to 161 (KGDERERGFRGPKPAGRFESGRGGAGGARRGYDDREEFRARNEREDGRDTDGEAE) is disordered. Residues 136–161 (RGYDDREEFRARNEREDGRDTDGEAE) are compositionally biased toward basic and acidic residues.

Belongs to the bacterial ribosomal protein bS6 family.

Its function is as follows. Binds together with bS18 to 16S ribosomal RNA. The polypeptide is Small ribosomal subunit protein bS6 (Gluconacetobacter diazotrophicus (strain ATCC 49037 / DSM 5601 / CCUG 37298 / CIP 103539 / LMG 7603 / PAl5)).